The chain runs to 527 residues: Amine oxidase [flavin-containing] A (527 aa).

Position 1 is an N-acetylmethionine (M1). Residues 1–497 (MENQEKASIA…HTFWERNLPS (497 aa)) are Cytoplasmic-facing. Position 383 is a phosphoserine (S383). C406 carries the S-8alpha-FAD cysteine modification. Residues 498–518 (VSGLLKIIGFSTSVTALGFVL) traverse the membrane as a helical; Anchor for type IV membrane protein segment. At 519-527 (YKYKLLPRS) the chain is on the mitochondrial intermembrane side. Positions 520–522 (KYK) are interaction with membrane phospholipid headgroups.

This sequence belongs to the flavin monoamine oxidase family. As to quaternary structure, monomer, homo- or heterodimer (containing two subunits of similar size). Each subunit contains a covalently bound flavin. Enzymatically active as monomer. Requires FAD as cofactor.

The protein resides in the mitochondrion outer membrane. It catalyses the reaction a secondary aliphatic amine + O2 + H2O = a primary amine + an aldehyde + H2O2. The catalysed reaction is a primary methyl amine + O2 + H2O = an aldehyde + H2O2 + NH4(+). It carries out the reaction (R)-adrenaline + O2 + H2O = (R)-3,4-dihydroxymandelaldehyde + methylamine + H2O2. The enzyme catalyses dopamine + O2 + H2O = 3,4-dihydroxyphenylacetaldehyde + H2O2 + NH4(+). It catalyses the reaction tyramine + O2 + H2O = (4-hydroxyphenyl)acetaldehyde + H2O2 + NH4(+). The catalysed reaction is (R)-noradrenaline + O2 + H2O = (R)-3,4-dihydroxymandelaldehyde + H2O2 + NH4(+). It carries out the reaction serotonin + O2 + H2O = (5-hydroxyindol-3-yl)acetaldehyde + H2O2 + NH4(+). The enzyme catalyses kynuramine + O2 + H2O = 3-(2-aminophenyl)-3-oxopropanal + H2O2 + NH4(+). It catalyses the reaction tryptamine + O2 + H2O = indole-3-acetaldehyde + H2O2 + NH4(+). The catalysed reaction is 2-phenylethylamine + O2 + H2O = 2-phenylacetaldehyde + H2O2 + NH4(+). In terms of biological role, catalyzes the oxidative deamination of primary and some secondary amine such as neurotransmitters, with concomitant reduction of oxygen to hydrogen peroxide and has important functions in the metabolism of neuroactive and vasoactive amines in the central nervous system and peripheral tissues. Preferentially oxidizes serotonin. Also catalyzes the oxidative deamination of kynuramine to 3-(2-aminophenyl)-3-oxopropanal that can spontaneously condense to 4-hydroxyquinoline. The sequence is that of Amine oxidase [flavin-containing] A from Pongo abelii (Sumatran orangutan).